The chain runs to 955 residues: Kinesin-like protein KIN-14L (955 aa).

The Calponin-homology (CH) domain occupies 19 to 140 (AARRFQAVQW…CILGLKAYHE (122 aa)). One can recognise a Kinesin motor domain in the interval 363–685 (NIRVYCRVRP…LKFAQRVSTV (323 aa)). 445–452 (GQTGSGKT) contributes to the ATP binding site. The stretch at 692-719 (AHKETREVMHLKEQIENLKRALGTEEWN) forms a coiled coil. A disordered region spans residues 878–942 (RKENIPADPR…GKPIENGKKD (65 aa)). A compositionally biased stretch (polar residues) spans 894 to 916 (NNFSHIKSPDTSNAKTMRRQSLT).

This sequence belongs to the TRAFAC class myosin-kinesin ATPase superfamily. Kinesin family. KIN-14 subfamily.

The sequence is that of Kinesin-like protein KIN-14L from Arabidopsis thaliana (Mouse-ear cress).